A 458-amino-acid chain; its full sequence is Tissue-resident T-cell transcription regulator protein ZNF683 (458 aa).

2 disordered regions span residues 84–109 and 249–275; these read PQDL…TDSE and TLHS…APTR. C2H2-type zinc fingers lie at residues 301–323, 329–351, and 357–379; these read YECN…LRVH, FQCA…HLVH, and HQCQ…LRLH.

The protein belongs to the krueppel C2H2-type zinc-finger protein family. In terms of tissue distribution, expressed in tissue-resident memory T (Trm) cell population in non-lymphoid organs, such as skin and gut. Expressed in innate lymphocytes, including tissue-resident natural killer (trNK) and natural killer T (NKT) cells in thymus, spleen and liver.

It localises to the nucleus. In terms of biological role, transcription factor that mediates a transcriptional program in various innate and adaptive immune tissue-resident lymphocyte T-cell types such as tissue-resident memory T (Trm), natural killer (trNK) and natural killer T (NKT) cells and negatively regulates gene expression of proteins that promote the egress of tissue-resident T-cell populations from non-lymphoid organs. Plays a role in the development, retention and long-term establishment of adaptive and innate tissue-resident lymphocyte T-cell types in non-lymphoid organs, such as the skin and gut, but also in other nonbarrier tissues like liver and kidney, and therefore may provide immediate immunological protection against reactivating infections or viral reinfection. Also plays a role in the differentiation of both thymic and peripheral NKT cells. Negatively regulates the accumulation of interferon-gamma (IFN-gamma) in NKT cells at steady state or after antigenic stimulation. Positively regulates granzyme B production in NKT cells after innate stimulation. Associates with the transcriptional repressor PRDM1/BLIMP1 to chromatin at gene promoter regions. The chain is Tissue-resident T-cell transcription regulator protein ZNF683 from Mus musculus (Mouse).